The primary structure comprises 78 residues: Mitotic-spindle organizing protein 1 (78 aa).

An N-acetylalanine modification is found at Ala2.

It belongs to the MOZART1 family. In terms of assembly, associates with the gamma-tubulin ring complex (gTuRC) consisting of TUBGCP2, TUBGCP3, TUBGCP4, TUBGCP5 and TUBGCP6 and gamma-tubulin TUBG1 or TUBG2; within the complex, interacts with TUBGCP3 and TUBGCP6 to form a luminal bridge with actin that stabilizes the initial structure during complex assembly. Interacts with TUBG1.

It is found in the cytoplasm. The protein localises to the cytoskeleton. The protein resides in the microtubule organizing center. Its subcellular location is the centrosome. It localises to the spindle. In terms of biological role, required for the recruitment and the assembly of the gamma-tubulin ring complex (gTuRC) at the centrosome. The gTuRC regulates the minus-end nucleation of alpha-beta tubulin heterodimers that grow into microtubule protafilaments, a critical step in centrosome duplication and spindle formation. The protein is Mitotic-spindle organizing protein 1 (Mzt1) of Mus musculus (Mouse).